The primary structure comprises 301 residues: UDP-N-acetylenolpyruvoylglucosamine reductase 1 (301 aa).

The FAD-binding PCMH-type domain maps to K29–G196. R174 is a catalytic residue. S225 serves as the catalytic Proton donor. E295 is an active-site residue.

The protein belongs to the MurB family. It depends on FAD as a cofactor.

The protein resides in the cytoplasm. The enzyme catalyses UDP-N-acetyl-alpha-D-muramate + NADP(+) = UDP-N-acetyl-3-O-(1-carboxyvinyl)-alpha-D-glucosamine + NADPH + H(+). The protein operates within cell wall biogenesis; peptidoglycan biosynthesis. Cell wall formation. The sequence is that of UDP-N-acetylenolpyruvoylglucosamine reductase 1 from Bacillus cereus (strain ZK / E33L).